The sequence spans 260 residues: MLAIISPAKTLDFETPAPNFPFANSQPKLTAYSQQLIDICKQFSPAELGSLMSISDKLASLNVARFAEWQLEHNEQNSKAALFAFKGDVYTGLDAETLTQAQVEYVQVHLRMLSGLYGLLKPLDLMQPYRLEMGTKLVNPKGKDLYAFWGDIITQHLQTAMDEQGDNILVNLASDEYYGAVKPQKLQATIIKPVFLDEKNGKFKQISFYAKKARGMMVRFILETQPTSVEQLKAFNYGSYWFDEDASGATELVFKREEQA.

This sequence belongs to the UPF0246 family.

The sequence is that of UPF0246 protein APP7_0648 from Actinobacillus pleuropneumoniae serotype 7 (strain AP76).